Reading from the N-terminus, the 213-residue chain is Uridine kinase (213 aa).

ATP is bound at residue 15–22 (GASASGKS).

The protein belongs to the uridine kinase family.

It is found in the cytoplasm. It carries out the reaction uridine + ATP = UMP + ADP + H(+). The enzyme catalyses cytidine + ATP = CMP + ADP + H(+). Its pathway is pyrimidine metabolism; CTP biosynthesis via salvage pathway; CTP from cytidine: step 1/3. The protein operates within pyrimidine metabolism; UMP biosynthesis via salvage pathway; UMP from uridine: step 1/1. This is Uridine kinase from Salmonella newport (strain SL254).